The chain runs to 809 residues: Trimethylamine-N-oxide reductase 2 (809 aa).

The tat-type signal signal peptide spans 1–31 (MTLTRREFIKHSGIAAGALVVTSAAPLPAWA). Residue Ser-176 coordinates Mo-bis(molybdopterin guanine dinucleotide).

The protein belongs to the prokaryotic molybdopterin-containing oxidoreductase family. Mo-bis(molybdopterin guanine dinucleotide) is required as a cofactor. Post-translationally, predicted to be exported by the Tat system. The position of the signal peptide cleavage has not been experimentally proven.

It is found in the periplasm. It catalyses the reaction trimethylamine + 2 Fe(III)-[cytochrome c] + H2O = trimethylamine N-oxide + 2 Fe(II)-[cytochrome c] + 3 H(+). Functionally, reduces trimethylamine-N-oxide (TMAO) into trimethylamine; an anaerobic reaction coupled to energy-yielding reactions. Can also reduce other N- and S-oxide compounds such as 4-methylmorpholine-N-oxide and biotin sulfoxide (BSO), but with a lower catalytic efficiency. The protein is Trimethylamine-N-oxide reductase 2 (torZ) of Escherichia coli O157:H7.